Reading from the N-terminus, the 735-residue chain is MSEINDFTNSIIINESDTKYEVYSEVNSSNRWIAKEDCPSPLEDVWLLKLAGHKRKLEEPLSCMRNEEPASKQREIEKFLRTDLDHSENDFLTQEVDEFPSTQQLFPIPLQNDTAFDSSEESITKSSKSSFSVLDIGLPMSALQRKMMHRLVQYFAFCIDHFCTGPSDSRIQEKIRLFIQSAHNIAKHPSLYDTEVRNPSAAESTNSHVSLDASNFSSYAENSSKFLFLQELFKNLSPSYSKTFFLFISNQFLANTLTQWLKSQNIDAELWAEEDAKTSQHPAIWICVSKKAPSASHFLQSCPDLSATIFYDIEAYMSVTSSLPSIQSLVLRLIHLGSIEHAIKCFQSSYNASFLVNIVGVVATLSSSSEENSEASNLSTLFEKSGNFEEILGSESHSSITEKTRDIAKNVATWLKNGENFSSWPLPPLMDLASLSVAEPRDSQPSVSQVNDTFVKSSDSTFPSSQSMQSPSKLHSLTSNATDLLSSSSLKKNFFSQQEADEVELSNNYDLQGAAVQYLQRRLRMVEDELHEAINSKNVQQSRSEELEQQISKLTDNLQEYRNTVRELKLDLEKSKKKNEDLSKLEVEKVEEIANLKKELTHLAKQQEFGFKYVQEFSNEDLQGKLIEANEKNYKLTQLLKTQKEDADFITNQYQNASTFAAEQSKEVAKLQAECKRLQAINSKVMEEVKVYNDSRVEALLAKVSSLEETLKILEQKSLPKFTPHNQSPRIIDSN.

A coiled-coil region spans residues 514 to 719 (AAVQYLQRRL…TLKILEQKSL (206 aa)).

In terms of assembly, interacts (during meiosis) with pcp1. Interacts with clr3, pot1, taz1 and tpz1.

The protein localises to the nucleus. It localises to the nucleoplasm. Its subcellular location is the chromosome. The protein resides in the telomere. Component of the meiotic bouquet that facilitates meiotic nuclear reorganization of the telomeres to the centrosome. Links telomeres to the meiotic centrosome component pcp1. Essential for the formation of normal telomere clusters during meiotic prophase. Required for telomere length regulation and chromosome segregation. Required for proper positioning of nucleosomes at heterochromatic loci and for transcriptional gene silencing (TGS) function of the Snf2/Hdac-containing repressor complex (SHREC). The protein is Coiled-coil quantitatively-enriched protein 1 (ccq1) of Schizosaccharomyces pombe (strain 972 / ATCC 24843) (Fission yeast).